The chain runs to 1036 residues: Isoleucine--tRNA ligase (1036 aa).

Positions 46-56 match the 'HIGH' region motif; the sequence is PFATGLPHYGH. Positions 589–593 match the 'KMSKS' region motif; it reads KMSKR. Position 592 (lysine 592) interacts with ATP.

This sequence belongs to the class-I aminoacyl-tRNA synthetase family. IleS type 2 subfamily. In terms of assembly, monomer. Zn(2+) serves as cofactor.

It is found in the cytoplasm. It carries out the reaction tRNA(Ile) + L-isoleucine + ATP = L-isoleucyl-tRNA(Ile) + AMP + diphosphate. Catalyzes the attachment of isoleucine to tRNA(Ile). As IleRS can inadvertently accommodate and process structurally similar amino acids such as valine, to avoid such errors it has two additional distinct tRNA(Ile)-dependent editing activities. One activity is designated as 'pretransfer' editing and involves the hydrolysis of activated Val-AMP. The other activity is designated 'posttransfer' editing and involves deacylation of mischarged Val-tRNA(Ile). In Chlamydia trachomatis serovar D (strain ATCC VR-885 / DSM 19411 / UW-3/Cx), this protein is Isoleucine--tRNA ligase.